The sequence spans 945 residues: Protein translocase subunit SecA (945 aa).

ATP contacts are provided by residues glutamine 90, 108-112 (GEGKT), and aspartate 509. The interval 533–568 (VKPEDGHKPPVPLQRRSESSGFGEDKDVTTDNSKPL) is disordered. The segment covering 547–561 (RRSESSGFGEDKDVT) has biased composition (basic and acidic residues).

The protein belongs to the SecA family. Monomer and homodimer. Part of the essential Sec protein translocation apparatus which comprises SecA, SecYEG and auxiliary proteins SecDF. Other proteins may also be involved.

Its subcellular location is the cell inner membrane. It is found in the cellular thylakoid membrane. The protein localises to the cytoplasm. It carries out the reaction ATP + H2O + cellular proteinSide 1 = ADP + phosphate + cellular proteinSide 2.. Functionally, part of the Sec protein translocase complex. Interacts with the SecYEG preprotein conducting channel. Has a central role in coupling the hydrolysis of ATP to the transfer of proteins into and across the cell membrane, serving as an ATP-driven molecular motor driving the stepwise translocation of polypeptide chains across the membrane. Probably participates in protein translocation into and across both the cytoplasmic and thylakoid membranes in cyanobacterial cells. This is Protein translocase subunit SecA from Prochlorococcus marinus (strain MIT 9211).